We begin with the raw amino-acid sequence, 283 residues long: MAQSTALTICGLVYSPAIGQELVRLHTSDIDELVYFSSEREFCNYLEARRNSVACLILEWGEGTPQIITYLHHSATLLPAILIFPAAPAPPPAGPHYHIAEVILTTDQLDQLNRQIEEAITGFVKLCPGCAVPPHVLFRLPALKESSNVDPQHRLSQKLKERLGYLGVYYKRDTAFFFRRMSPADKRKLLDELRSIYRTIVLEYFNTDAKVNERIDEFVSKAFFADISVSQVLEIHVELMDTFSKQLKLEGRSEDILLDYRLTLIDVIAHLCEMYRRSIPREV.

Residues 3 to 133 (QSTALTICGL…VKLCPGCAVP (131 aa)) form a psR domain, binds oxidized quinones region. Residues 3–163 (QSTALTICGL…RLSQKLKERL (161 aa)) enclose the KaiA N-terminal domain. The tract at residues 164-172 (GYLGVYYKR) is flexible linker. The region spanning 173 to 281 (DTAFFFRRMS…CEMYRRSIPR (109 aa)) is the KaiA C-terminal domain.

As to quaternary structure, homodimer. The KaiABC complex composition changes during the circadian cycle to control KaiC phosphorylation. Complexes KaiC(6), KaiA(2-4):KaiC(6), KaiB(6):KaiC(6) and KaiC(6):KaiB(6):KaiA(12) are among the most important forms, many form cooperatively. KaiA and CikA bind to the same region of the KaiB(fs) form and therefore compete.

In terms of biological role, key component of the KaiABC oscillator complex, which constitutes the main circadian regulator in cyanobacteria. Complex composition changes during the circadian cycle to control KaiC phosphorylation. KaiA stimulates KaiC autophosphorylation, while KaiB sequesters KaiA, leading to KaiC autodephosphorylation. KaiA binding to the KaiC CII domain during the subjective day yields KaiA(2-4):KaiC(6) complexes which stimulate KaiC autophosphorylation. Phospho-Ser-431 KaiC accumulation triggers binding of KaiB during the subjective night to form the KaiB(6):KaiC(6) complex, leading to changes in the output regulators CikA and SasA. KaiB(6):KaiC(6) formation exposes a site for KaiA binding on KaiB that sequesters KaiA from KaiC's CII domain, making the KaiC(6):KaiB(6):KaiA(12) complex resulting in KaiC autodephosphorylation. Complete dephosphorylation of KaiC leads to dissociation of KaiA(2):KaiB(1), completing 1 cycle of the Kai oscillator. Functionally, binds oxidized quinones via the N-terminal PsR domain, allowing it to sense redox changes and possibly mediate clock input. This chain is Circadian clock oscillator protein KaiA, found in Thermostichus vulcanus (Synechococcus vulcanus).